The chain runs to 217 residues: UPF0502 protein PFLU_2135 (217 aa).

Belongs to the UPF0502 family.

The chain is UPF0502 protein PFLU_2135 from Pseudomonas fluorescens (strain SBW25).